The following is a 251-amino-acid chain: Cell division protein ZapD (251 aa).

The protein belongs to the ZapD family. Interacts with FtsZ.

It localises to the cytoplasm. Functionally, cell division factor that enhances FtsZ-ring assembly. Directly interacts with FtsZ and promotes bundling of FtsZ protofilaments, with a reduction in FtsZ GTPase activity. This Paraburkholderia phymatum (strain DSM 17167 / CIP 108236 / LMG 21445 / STM815) (Burkholderia phymatum) protein is Cell division protein ZapD.